The primary structure comprises 58 residues: Sodium/potassium-transporting ATPase subunit gamma (58 aa).

A helical membrane pass occupies residues 20 to 39 (NGGLIFAALAFIVGLVIILS).

This sequence belongs to the FXYD family. Regulatory subunit of the sodium/potassium-transporting ATPase which is composed of a catalytic alpha subunit, an auxiliary non-catalytic beta subunit and an additional regulatory subunit. Highest levels expressed in the kidney and spleen. Restricted to the basolateral membrane in renal epithelial cells and varies in its level of expression along the nephron.

The protein resides in the membrane. In terms of biological role, may be involved in forming the receptor site for cardiac glycoside binding or may modulate the transport function of the sodium ATPase. In Bos taurus (Bovine), this protein is Sodium/potassium-transporting ATPase subunit gamma (FXYD2).